The chain runs to 272 residues: Ribonuclease HII (272 aa).

The RNase H type-2 domain maps to Lys-87–Leu-272. A divalent metal cation-binding residues include Asp-93, Glu-94, and Asp-188.

The protein belongs to the RNase HII family. Requires Mn(2+) as cofactor. It depends on Mg(2+) as a cofactor.

Its subcellular location is the cytoplasm. The enzyme catalyses Endonucleolytic cleavage to 5'-phosphomonoester.. Its function is as follows. Endonuclease that specifically degrades the RNA of RNA-DNA hybrids. The polypeptide is Ribonuclease HII (Clostridium perfringens (strain 13 / Type A)).